A 63-amino-acid chain; its full sequence is Large ribosomal subunit protein uL29 (63 aa).

Belongs to the universal ribosomal protein uL29 family.

This chain is Large ribosomal subunit protein uL29, found in Bordetella pertussis (strain Tohama I / ATCC BAA-589 / NCTC 13251).